Reading from the N-terminus, the 455-residue chain is Gastric inhibitory polypeptide receptor (455 aa).

Positions 1–18 are cleaved as a signal peptide; sequence MPLRLLLLLLWLWGLSLQ. At 19–135 the chain is on the extracellular side; the sequence is RAETDSEGQT…DQKLILERLQ (117 aa). Intrachain disulfides connect Cys-43-Cys-67, Cys-58-Cys-100, and Cys-81-Cys-115. N-linked (GlcNAc...) asparagine glycans are attached at residues Asn-59, Asn-69, and Asn-74. Residues 136–158 traverse the membrane as a helical segment; it reads VVYTVGYSLSLATLLLALLILSL. Residues 159–166 lie on the Cytoplasmic side of the membrane; that stretch reads FRRLHCTR. A helical membrane pass occupies residues 167 to 186; that stretch reads NYIHMNLFTSFMLRAGAILT. Over 187–214 the chain is Extracellular; sequence RDQLLPPLGPYTGNQTPTLWNQALAACR. Residues 215–239 traverse the membrane as a helical segment; sequence TAQILTQYCVGANYTWLLVEGVYLH. The Cytoplasmic portion of the chain corresponds to 240-251; it reads HLLVVVRRSEKG. Residues 252-275 traverse the membrane as a helical segment; that stretch reads HFRCYLLLGWGAPALFVIPWVIVR. The Extracellular segment spans residues 276–290; the sequence is YLYENTQCWERNEVK. The helical transmembrane segment at 291–316 threads the bilayer; it reads AIWWIIRTPILITILINFLIFIRILG. Residues 317 to 338 lie on the Cytoplasmic side of the membrane; it reads ILVSKLRTRQMRCPDYRLRLAR. The helical transmembrane segment at 339–359 threads the bilayer; the sequence is STLTLMPLLGVHEVVFAPVTE. Residues 360 to 374 are Extracellular-facing; the sequence is EQAEGSLRFAKLAFE. The chain crosses the membrane as a helical span at residues 375 to 395; that stretch reads IFLSSFQGFLVSVLYCFINKE. Over 396–455 the chain is Cytoplasmic; that stretch reads VQSEIRRLRLSLQEQCPRPHLGQAPRAVPLSSAPQEAAIRNALPSGMLHVPGDEVLESYC.

This sequence belongs to the G-protein coupled receptor 2 family. In terms of assembly, may form homodimers and heterodimers with GLP1R. N-glycosylation is required for cell surface expression and lengthens receptor half-life by preventing degradation in the ER. As to expression, present in the pancreas as well as the gut, adipose tissue, heart, pituitary, and inner layers of the adrenal cortex, whereas it is not found in kidney, spleen, or liver. It is also expressed in several brain regions, including the cerebral cortex, hippocampus, and olfactory bulb.

The protein resides in the cell membrane. Its function is as follows. This is a receptor for GIP. The activity of this receptor is mediated by G proteins which activate adenylyl cyclase. The polypeptide is Gastric inhibitory polypeptide receptor (Gipr) (Rattus norvegicus (Rat)).